The chain runs to 370 residues: Maturase K (370 aa).

It belongs to the intron maturase 2 family. MatK subfamily.

Its subcellular location is the plastid. It localises to the chloroplast. In terms of biological role, usually encoded in the trnK tRNA gene intron. Probably assists in splicing its own and other chloroplast group II introns. The polypeptide is Maturase K (Marchantia polymorpha (Common liverwort)).